A 697-amino-acid chain; its full sequence is MSQEKKVFKTEWANRSLTIETGQLAKQANGAVLVRYGDTVVLSTAVASKEPRDGDFFPLMVNYEEKMYAAGKIPGGFKKREGRPSDEATLTARLIDRPIRPLFPKGYKYDVQIMNTVLSADPDCSPEMAAMIGSSMALSVSDIPFQGPIAGVKVGYIDGEYVINPTVAQKEVSRLDLEVAGHKDAVNMVEAGASEITESEMLEAIFFGHSEIQRLVNFQQEIVDHIQPKKKAFVPVEKDEVLVEKVKQLTQENGLKDAVLTFDKQQRDINLDALKEKVAAEFIDEEDADNEVLIKEVNSILNDLVKEEVRRLIAEEKIRPDGRKTDEIRPLESEVGVLPRAHGSGLFTRGQTQALSVLTLGSMSEYQILDGLGEEEQKRFMHHYNFPNYSVGETGPVRSPGRREIGHGALGERALSHIIPDLKDFPYTVRIVSEVLESNGSSSQASICGSTLALMDAGVPIKAPVAGIAMGLVTRDDSYTILTDIQGMEDALGDMDFKVAGTAEGITAIQMDIKIDGLTKEIIKEALDQAREGRLAILDHMLQTIDTSRSELSAFAPKVVTMTIKPEKIRDVIGPGGKKINEIIDETGVKLDIEQDGTIFIGAVDKDAIARARSIIEDITREAEVGQVYEGKVKRIEKYGAFVELFPGKDALVHISQIANERIDKVEDVLKVGDIFKIKVTEIDKQGRVNASHKALL.

2 residues coordinate Mg(2+): Asp490 and Asp496. Positions 557–616 (PKVVTMTIKPEKIRDVIGPGGKKINEIIDETGVKLDIEQDGTIFIGAVDKDAIARARSII) constitute a KH domain. The S1 motif domain maps to 626-694 (GQVYEGKVKR…KQGRVNASHK (69 aa)).

It belongs to the polyribonucleotide nucleotidyltransferase family. Mg(2+) serves as cofactor.

Its subcellular location is the cytoplasm. The catalysed reaction is RNA(n+1) + phosphate = RNA(n) + a ribonucleoside 5'-diphosphate. In terms of biological role, involved in mRNA degradation. Catalyzes the phosphorolysis of single-stranded polyribonucleotides processively in the 3'- to 5'-direction. The protein is Polyribonucleotide nucleotidyltransferase of Staphylococcus saprophyticus subsp. saprophyticus (strain ATCC 15305 / DSM 20229 / NCIMB 8711 / NCTC 7292 / S-41).